The following is an 825-amino-acid chain: Arabinolytic transcriptional activator araR (825 aa).

A compositionally biased stretch (polar residues) spans 1–17 (MASSHQGNGTVPNSQTD). The tract at residues 1–28 (MASSHQGNGTVPNSQTDAPPDSSTKRRW) is disordered. A DNA-binding region (zn(2)-C6 fungal-type) is located at residues 35–61 (CDSCHARRVRCDRQFPCSRCLRSEITC). The segment at 117–152 (STFHHRSPPANAPTVSAPSVDGRRSQTDPQLPVRRP) is disordered.

The protein belongs to the xlnR/xlr1 family. araR subfamily.

Its subcellular location is the nucleus. In terms of biological role, transcriptional activator of the arabinanolytic system. Involved in the regulation of extracellular arabinanolytic genes and in the regulation of the intracellular activities of L-arabinose catabolic genes in the pentose catabolic pathway (PCP) in response to the presence of L-arabinose. This Emericella nidulans (strain FGSC A4 / ATCC 38163 / CBS 112.46 / NRRL 194 / M139) (Aspergillus nidulans) protein is Arabinolytic transcriptional activator araR.